We begin with the raw amino-acid sequence, 328 residues long: DNA-directed RNA polymerase subunit alpha (328 aa).

The segment at 1–233 (MHNSATEFLK…EQLEAFIDLR (233 aa)) is alpha N-terminal domain (alpha-NTD). The segment at 247-328 (FDPVLLRPVD…WPPVSILKND (82 aa)) is alpha C-terminal domain (alpha-CTD).

The protein belongs to the RNA polymerase alpha chain family. As to quaternary structure, homodimer. The RNAP catalytic core consists of 2 alpha, 1 beta, 1 beta' and 1 omega subunit. When a sigma factor is associated with the core the holoenzyme is formed, which can initiate transcription.

The catalysed reaction is RNA(n) + a ribonucleoside 5'-triphosphate = RNA(n+1) + diphosphate. Functionally, DNA-dependent RNA polymerase catalyzes the transcription of DNA into RNA using the four ribonucleoside triphosphates as substrates. The polypeptide is DNA-directed RNA polymerase subunit alpha (Wigglesworthia glossinidia brevipalpis).